We begin with the raw amino-acid sequence, 293 residues long: Pyridoxal 5'-phosphate synthase subunit PdxS (293 aa).

Asp-23 serves as a coordination point for D-ribose 5-phosphate. Residue Lys-80 is the Schiff-base intermediate with D-ribose 5-phosphate of the active site. Residue Gly-152 coordinates D-ribose 5-phosphate. Arg-164 provides a ligand contact to D-glyceraldehyde 3-phosphate. Residues Gly-213 and 234 to 235 each bind D-ribose 5-phosphate; that span reads GS.

It belongs to the PdxS/SNZ family. As to quaternary structure, in the presence of PdxT, forms a dodecamer of heterodimers.

It carries out the reaction aldehydo-D-ribose 5-phosphate + D-glyceraldehyde 3-phosphate + L-glutamine = pyridoxal 5'-phosphate + L-glutamate + phosphate + 3 H2O + H(+). It participates in cofactor biosynthesis; pyridoxal 5'-phosphate biosynthesis. Functionally, catalyzes the formation of pyridoxal 5'-phosphate from ribose 5-phosphate (RBP), glyceraldehyde 3-phosphate (G3P) and ammonia. The ammonia is provided by the PdxT subunit. Can also use ribulose 5-phosphate and dihydroxyacetone phosphate as substrates, resulting from enzyme-catalyzed isomerization of RBP and G3P, respectively. This chain is Pyridoxal 5'-phosphate synthase subunit PdxS, found in Dehalococcoides mccartyi (strain ATCC BAA-2266 / KCTC 15142 / 195) (Dehalococcoides ethenogenes (strain 195)).